A 266-amino-acid polypeptide reads, in one-letter code: Segregation and condensation protein A (266 aa).

It belongs to the ScpA family. In terms of assembly, component of a cohesin-like complex composed of ScpA, ScpB and the Smc homodimer, in which ScpA and ScpB bind to the head domain of Smc. The presence of the three proteins is required for the association of the complex with DNA.

It localises to the cytoplasm. Participates in chromosomal partition during cell division. May act via the formation of a condensin-like complex containing Smc and ScpB that pull DNA away from mid-cell into both cell halves. In Coxiella burnetii (strain RSA 493 / Nine Mile phase I), this protein is Segregation and condensation protein A.